Reading from the N-terminus, the 357-residue chain is Chorismate synthase (357 aa).

The segment covering 38–49 (EKDIQPDLDRRK) has biased composition (basic and acidic residues). Positions 38 to 60 (EKDIQPDLDRRKPGTSRYTTPRR) are disordered. 2 residues coordinate NADP(+): arginine 48 and arginine 54. Residues 125–127 (RSS), 243–244 (NA), glycine 283, 298–302 (KPTSS), and arginine 324 each bind FMN.

This sequence belongs to the chorismate synthase family. As to quaternary structure, homotetramer. FMNH2 is required as a cofactor.

The enzyme catalyses 5-O-(1-carboxyvinyl)-3-phosphoshikimate = chorismate + phosphate. It participates in metabolic intermediate biosynthesis; chorismate biosynthesis; chorismate from D-erythrose 4-phosphate and phosphoenolpyruvate: step 7/7. In terms of biological role, catalyzes the anti-1,4-elimination of the C-3 phosphate and the C-6 proR hydrogen from 5-enolpyruvylshikimate-3-phosphate (EPSP) to yield chorismate, which is the branch point compound that serves as the starting substrate for the three terminal pathways of aromatic amino acid biosynthesis. This reaction introduces a second double bond into the aromatic ring system. This Haemophilus influenzae (strain PittGG) protein is Chorismate synthase.